The following is a 415-amino-acid chain: Gamma-glutamyl phosphate reductase (415 aa).

Belongs to the gamma-glutamyl phosphate reductase family.

It localises to the cytoplasm. It catalyses the reaction L-glutamate 5-semialdehyde + phosphate + NADP(+) = L-glutamyl 5-phosphate + NADPH + H(+). It participates in amino-acid biosynthesis; L-proline biosynthesis; L-glutamate 5-semialdehyde from L-glutamate: step 2/2. Functionally, catalyzes the NADPH-dependent reduction of L-glutamate 5-phosphate into L-glutamate 5-semialdehyde and phosphate. The product spontaneously undergoes cyclization to form 1-pyrroline-5-carboxylate. The chain is Gamma-glutamyl phosphate reductase from Dictyoglomus thermophilum (strain ATCC 35947 / DSM 3960 / H-6-12).